A 589-amino-acid chain; its full sequence is Parathyroid hormone/parathyroid hormone-related peptide receptor (589 aa).

Positions 1–28 (MGAARIAPGLALLLCCPVLSSAYALVDA) are cleaved as a signal peptide. The Extracellular segment spans residues 29-188 (DDVMTKEEQI…REREVFDRLG (160 aa)). 3 disulfide bridges follow: cysteine 48-cysteine 117, cysteine 108-cysteine 148, and cysteine 131-cysteine 170. Positions 64 to 105 (ESDKGWASASTSGKPKKEKPSGKLHPESEEDKEVPTGSRPRG) are disordered. Basic and acidic residues predominate over residues 81–90 (EKPSGKLHPE). N-linked (GlcNAc...) asparagine glycans are attached at residues asparagine 151, asparagine 161, asparagine 166, and asparagine 176. A helical transmembrane segment spans residues 189–209 (MIYTVGYSVSLASLTVAVLIL). The Cytoplasmic segment spans residues 210-223 (AYFRRLHCTRNYIH). The helical transmembrane segment at 224–244 (MHLFLSFMLRAVSIFVKDAVL) threads the bilayer. Topologically, residues 245-294 (YSGTALDEAERLTEEELRAIAQAPPPPAAAAGYVGCRVAVTFFLYFLATN) are extracellular. The helical transmembrane segment at 295–315 (YYWILVEGLYLHSLIFMAFFS) threads the bilayer. Residues 316–318 (EKK) lie on the Cytoplasmic side of the membrane. The chain crosses the membrane as a helical span at residues 319 to 339 (YLWGFTVFGWGLPAIFVAVWV). Over 340 to 360 (SVRATLANTGCWDLSSGNKKW) the chain is Extracellular. A helical transmembrane segment spans residues 361–381 (IIQVPILASIVLNFILFINIV). At 382-404 (RVLATKLRETNAGRCDTRQQYRK) the chain is on the cytoplasmic side. Residues 405 to 425 (LLKSTLVLMPLFGVHYIVFMA) traverse the membrane as a helical segment. Over 426–439 (TPYTEVSGTLWQVQ) the chain is Extracellular. The helical transmembrane segment at 440–460 (MHYEMLFNSFQGFFVAIIYCF) threads the bilayer. Over 461–589 (CNGEVQAEIK…LLQEEWETVM (129 aa)) the chain is Cytoplasmic. The Important for interaction with G proteins motif lies at 473–476 (WSRW). Positions 524–549 (AATTNGHPPLPGHTKSGSPALQATPP) are disordered. Threonine 547 carries the post-translational modification Phosphothreonine.

It belongs to the G-protein coupled receptor 2 family. As to quaternary structure, homodimer in the absence of bound ligand. Peptide hormone binding leads to dissociation of the homodimer. In terms of processing, N-glycosylated.

Its subcellular location is the cell membrane. Functionally, G-protein-coupled receptor for parathyroid hormone (PTH) and for parathyroid hormone-related peptide (PTHLH). Ligand binding causes a conformation change that triggers signaling via guanine nucleotide-binding proteins (G proteins) and modulates the activity of downstream effectors, such as adenylate cyclase (cAMP). PTH1R is coupled to G(s) G alpha proteins and mediates activation of adenylate cyclase activity. PTHLH dissociates from PTH1R more rapidly than PTH; as consequence, the cAMP response induced by PTHLH decays faster than the response induced by PTH. In Bos taurus (Bovine), this protein is Parathyroid hormone/parathyroid hormone-related peptide receptor (PTH1R).